The following is a 68-amino-acid chain: Beta-defensin 1 (68 aa).

Positions 1–21 are cleaved as a signal peptide; that stretch reads MRTSYLLLFTLCLLLSEMASG. Residues 22–32 constitute a propeptide that is removed on maturation; sequence GNFLTGLGHRS. Disulfide bonds link Cys-37–Cys-66, Cys-44–Cys-59, and Cys-49–Cys-67.

The protein belongs to the beta-defensin family. In terms of assembly, monomer. Homodimer.

It is found in the secreted. Its subcellular location is the membrane. Has bactericidal activity. May act as a ligand for C-C chemokine receptor CCR6. Positively regulates the sperm motility and bactericidal activity in a CCR6-dependent manner. Binds to CCR6 and triggers Ca2+ mobilization in the sperm which is important for its motility. This chain is Beta-defensin 1 (DEFB1), found in Pongo pygmaeus (Bornean orangutan).